We begin with the raw amino-acid sequence, 333 residues long: DNA-directed RNA polymerase subunit alpha (333 aa).

The segment at methionine 1–lysine 234 is alpha N-terminal domain (alpha-NTD). The tract at residues isoleucine 248–alanine 333 is alpha C-terminal domain (alpha-CTD).

This sequence belongs to the RNA polymerase alpha chain family. As to quaternary structure, homodimer. The RNAP catalytic core consists of 2 alpha, 1 beta, 1 beta' and 1 omega subunit. When a sigma factor is associated with the core the holoenzyme is formed, which can initiate transcription.

It carries out the reaction RNA(n) + a ribonucleoside 5'-triphosphate = RNA(n+1) + diphosphate. In terms of biological role, DNA-dependent RNA polymerase catalyzes the transcription of DNA into RNA using the four ribonucleoside triphosphates as substrates. This Pseudomonas entomophila (strain L48) protein is DNA-directed RNA polymerase subunit alpha.